We begin with the raw amino-acid sequence, 704 residues long: Elongation factor G (704 aa).

Residues 8-291 (DKVRNIGIMA…AVVEYLASPV (284 aa)) enclose the tr-type G domain. GTP contacts are provided by residues 17-24 (AHIDAGKT), 90-94 (DTPGH), and 144-147 (NKMD).

The protein belongs to the TRAFAC class translation factor GTPase superfamily. Classic translation factor GTPase family. EF-G/EF-2 subfamily.

It localises to the cytoplasm. In terms of biological role, catalyzes the GTP-dependent ribosomal translocation step during translation elongation. During this step, the ribosome changes from the pre-translocational (PRE) to the post-translocational (POST) state as the newly formed A-site-bound peptidyl-tRNA and P-site-bound deacylated tRNA move to the P and E sites, respectively. Catalyzes the coordinated movement of the two tRNA molecules, the mRNA and conformational changes in the ribosome. In Chlorobium limicola (strain DSM 245 / NBRC 103803 / 6330), this protein is Elongation factor G.